A 557-amino-acid polypeptide reads, in one-letter code: DNA replication factor Cdt1 (557 aa).

The short motif at 1-25 (MAQSRVTDFYACRRPGLTTPRAKSI) is the PIP-box K+4 motif element. A disordered region spans residues 20–113 (PRAKSICLTP…VCPSPVKRTK (94 aa)). Thr28 carries the phosphothreonine; by MAPK8 modification. A Phosphoserine modification is found at Ser30. A Cyclin-binding motif motif is present at residues 65 to 67 (RRL). Over residues 69–81 (LPGLDSCPSSLPE) the composition is skewed to low complexity. Residues 82–106 (PSSPAEPSPPADPSPPADPGSPVCP) show a composition bias toward pro residues. Ser107 is subject to Phosphoserine; by MAPK8. Positions 163 to 203 (PSTPDAKVPTEQPCVEKAPAYQRFHALAQPGLPGLVLPYKY) are interaction with GMNN. Ser392 bears the Phosphoserine mark. Residues 397-427 (RSAEPGSPGTSTPPLPATPPATPPAASPSAL) are disordered. A compositionally biased stretch (pro residues) spans 407–422 (STPPLPATPPATPPAA). The segment at 463 to 557 (LERLPELARV…LAHHVHAEGL (95 aa)) is interaction with LRWD1.

This sequence belongs to the Cdt1 family. In terms of assembly, interacts with GMNN; the interaction inhibits the binding of the MCM complex to origins of replication. Interacts with MCM6. Interacts with CDC6; are mutually dependent on one another for loading MCM complexes onto chromatin. Interacts with PCNA. Interacts with LRWD1 during G1 phase and during mitosis. Interacts with NDC80 subunit of the NDC80 complex; leading to kinetochore localization. Interacts with KAT7. Interacts with ubiquitin-binding protein FAF1; the interaction is likely to promote CDT1 degradation. Post-translationally, two independent E3 ubiquitin ligase complexes, SCF(SKP2) and the DCX(DTL) complex, mediated CDT1 degradation in S phase. Ubiquitinated by the DCX(DTL) complex, in response to DNA damage, leading to its degradation. Ubiquitination by the DCX(DTL) complex is necessary to ensure proper cell cycle regulation and is PCNA-dependent: interacts with PCNA via its PIP-box, while the presence of the containing the 'K+4' motif in the PIP box, recruit the DCX(DTL) complex, leading to its degradation. Phosphorylation at Thr-28 by CDK2 targets CDT1 for ubiquitynation by SCF(SKP2) E3 ubiquitin ligase and subsequent degradation. The interaction with GMNN protects it against ubiquitination. Deubiquitinated by USP37. Ubiquitinated and degraded by the SCF(FBXO31) complex during the G2 phase to prevent re-replication. In terms of processing, phosphorylation by cyclin A-dependent kinases at Thr-28 targets CDT1 for ubiquitynation by SCF(SKP2) E3 ubiquitin ligase and subsequent degradation. Phosphorylated at Thr-28 by MAPK8/JNK1, which blocks replication licensing in response to stress. Binding to GMNN is not affected by phosphorylation.

The protein localises to the nucleus. Its subcellular location is the chromosome. It is found in the centromere. The protein resides in the kinetochore. Its function is as follows. Required for both DNA replication and mitosis. DNA replication licensing factor, required for pre-replication complex assembly. Cooperates with CDC6 and the origin recognition complex (ORC) during G1 phase of the cell cycle to promote the loading of the mini-chromosome maintenance (MCM) complex onto DNA to generate pre-replication complexes (pre-RC). Required also for mitosis by promoting stable kinetochore-microtubule attachments. Potential oncogene. This Mus musculus (Mouse) protein is DNA replication factor Cdt1.